Reading from the N-terminus, the 312-residue chain is Acetaldehyde dehydrogenase (312 aa).

11-14 (SGNI) contributes to the NAD(+) binding site. C129 functions as the Acyl-thioester intermediate in the catalytic mechanism. NAD(+) is bound by residues 160 to 168 (SAGPGTRAN) and N287.

This sequence belongs to the acetaldehyde dehydrogenase family.

It carries out the reaction acetaldehyde + NAD(+) + CoA = acetyl-CoA + NADH + H(+). The polypeptide is Acetaldehyde dehydrogenase (xylQ) (Sphingobium yanoikuyae (Sphingomonas yanoikuyae)).